The primary structure comprises 463 residues: MPGMEYSTVSKIYGPLMIVEGVKGVAYGEVVEIETESGEKRKGQVLEARENLAIVQVFEGTRDLDIKTTRVRFTGETLKVPVSMDMLGRIFNGIGKPIDGGPEIIPEDRRDVHGAPLNPVARAYPRDFIQTGISAIDGMNTLVRGQKLPIFSGSGLPHNMLAAQIARQAKVLGEEEQFAVVFAAMGITYEEANFFKKSFEETGAIERAVLFLNLADDPAIERIITPRMALTVAEYLAFDYDMQVLVILTDMTNYAEALREISAAREEVPGRRGYPGYMYTDLATIYERAGRVRGKKGSITQMPILTMPDDDITHPIPDLTGYITEGQIVLSRELHRKGIYPPIDVLPSLSRLMKDGIGKGRTREDHPQLSQQLYAAYAEGRSLRDLVAVVGEEALSETDRKYLKFADRFEREFVAQRYDEDRSIFETLDLGWELLAELPESELKRVRKEYILKYHPKYRKRGS.

The protein belongs to the ATPase alpha/beta chains family. Has multiple subunits with at least A(3), B(3), C, D, E, F, H, I and proteolipid K(x).

Its subcellular location is the cell membrane. Functionally, component of the A-type ATP synthase that produces ATP from ADP in the presence of a proton gradient across the membrane. The B chain is a regulatory subunit. The chain is A-type ATP synthase subunit B from Thermococcus gammatolerans (strain DSM 15229 / JCM 11827 / EJ3).